Reading from the N-terminus, the 226-residue chain is UPF0319 protein YPO1442/y2728/YP_1333 (226 aa).

Positions 1 to 20 (MKLGLVAGMLAVCFSFSSVA) are cleaved as a signal peptide.

This sequence belongs to the UPF0319 family.

In Yersinia pestis, this protein is UPF0319 protein YPO1442/y2728/YP_1333.